We begin with the raw amino-acid sequence, 57 residues long: UPF0391 membrane protein Arad_3976 (57 aa).

Transmembrane regions (helical) follow at residues W4 to S24 and V33 to G53.

This sequence belongs to the UPF0391 family.

It localises to the cell membrane. The protein is UPF0391 membrane protein Arad_3976 of Rhizobium rhizogenes (strain K84 / ATCC BAA-868) (Agrobacterium radiobacter).